The chain runs to 105 residues: MTFRPLLDRVVIRRAEGNTQSKGGIIIPDTAKEKPQEGEVIAVGPGSRDESGKLIPLDVKIGDTILFGKWSGTEVKIDGEDLLIMKESDIMGIVANTVPTAANAA.

Belongs to the GroES chaperonin family. In terms of assembly, heptamer of 7 subunits arranged in a ring. Interacts with the chaperonin GroEL.

It localises to the cytoplasm. Functionally, together with the chaperonin GroEL, plays an essential role in assisting protein folding. The GroEL-GroES system forms a nano-cage that allows encapsulation of the non-native substrate proteins and provides a physical environment optimized to promote and accelerate protein folding. GroES binds to the apical surface of the GroEL ring, thereby capping the opening of the GroEL channel. This is Co-chaperonin GroES 3 from Rhizobium meliloti (strain 1021) (Ensifer meliloti).